The following is a 242-amino-acid chain: Biosynthetic peptidoglycan transglycosylase (242 aa).

The helical transmembrane segment at 12-31 threads the bilayer; the sequence is LLFWLMLASALLVLALRWLP.

This sequence belongs to the glycosyltransferase 51 family.

Its subcellular location is the cell inner membrane. It catalyses the reaction [GlcNAc-(1-&gt;4)-Mur2Ac(oyl-L-Ala-gamma-D-Glu-L-Lys-D-Ala-D-Ala)](n)-di-trans,octa-cis-undecaprenyl diphosphate + beta-D-GlcNAc-(1-&gt;4)-Mur2Ac(oyl-L-Ala-gamma-D-Glu-L-Lys-D-Ala-D-Ala)-di-trans,octa-cis-undecaprenyl diphosphate = [GlcNAc-(1-&gt;4)-Mur2Ac(oyl-L-Ala-gamma-D-Glu-L-Lys-D-Ala-D-Ala)](n+1)-di-trans,octa-cis-undecaprenyl diphosphate + di-trans,octa-cis-undecaprenyl diphosphate + H(+). The protein operates within cell wall biogenesis; peptidoglycan biosynthesis. Functionally, peptidoglycan polymerase that catalyzes glycan chain elongation from lipid-linked precursors. The chain is Biosynthetic peptidoglycan transglycosylase from Ectopseudomonas mendocina (strain ymp) (Pseudomonas mendocina).